The primary structure comprises 205 residues: Transmembrane emp24 domain-containing protein A (205 aa).

An N-terminal signal peptide occupies residues 1–24 (MMNNKLLLLVIALLCIASNSIVES). Topologically, residues 25 to 172 (FSFKVSAKVE…RNTAESTNSR (148 aa)) are lumenal. The GOLD domain occupies 34–116 (EECIYEEIGV…DKTVSFILSV (83 aa)). The chain crosses the membrane as a helical span at residues 173-193 (VLWWSVFEAFVLIALSIWQIY). Residues 194 to 205 (YLRRFFEVKRAV) are Cytoplasmic-facing.

Belongs to the EMP24/GP25L family.

The protein localises to the cytoplasmic vesicle membrane. Its function is as follows. Could have a role in the budding of coatomer-coated and other species of coated vesicles. The sequence is that of Transmembrane emp24 domain-containing protein A (empA) from Dictyostelium discoideum (Social amoeba).